The following is a 275-amino-acid chain: Endolytic peptidoglycan transglycosylase RlpA (275 aa).

The signal sequence occupies residues 1 to 22; the sequence is MQIKTITLKLSAVSLGALFFSG. Cys-23 carries N-palmitoyl cysteine lipidation. The S-diacylglycerol cysteine moiety is linked to residue Cys-23. One can recognise an SPOR domain in the interval 200-275; that stretch reads IYEGGNFMVQ…AFAGAFVVRE (76 aa).

Belongs to the RlpA family.

The protein resides in the cell membrane. Its function is as follows. Lytic transglycosylase with a strong preference for naked glycan strands that lack stem peptides. This chain is Endolytic peptidoglycan transglycosylase RlpA, found in Campylobacter jejuni subsp. jejuni serotype O:2 (strain ATCC 700819 / NCTC 11168).